A 222-amino-acid chain; its full sequence is Pyridoxine/pyridoxamine 5'-phosphate oxidase (222 aa).

FMN-binding positions include 69 to 74 (RMVLLK), 84 to 85 (YT), K91, and Q113. Residue K74 coordinates substrate. 3 residues coordinate substrate: Y131, R135, and S139. Residues 148–149 (QS) and W193 contribute to the FMN site. A substrate-binding site is contributed by 199–201 (RLH). Position 203 (R203) interacts with FMN.

The protein belongs to the pyridoxamine 5'-phosphate oxidase family. Homodimer. FMN serves as cofactor.

The enzyme catalyses pyridoxamine 5'-phosphate + O2 + H2O = pyridoxal 5'-phosphate + H2O2 + NH4(+). The catalysed reaction is pyridoxine 5'-phosphate + O2 = pyridoxal 5'-phosphate + H2O2. Its pathway is cofactor metabolism; pyridoxal 5'-phosphate salvage; pyridoxal 5'-phosphate from pyridoxamine 5'-phosphate: step 1/1. It functions in the pathway cofactor metabolism; pyridoxal 5'-phosphate salvage; pyridoxal 5'-phosphate from pyridoxine 5'-phosphate: step 1/1. Its function is as follows. Catalyzes the oxidation of either pyridoxine 5'-phosphate (PNP) or pyridoxamine 5'-phosphate (PMP) into pyridoxal 5'-phosphate (PLP). This Maricaulis maris (strain MCS10) (Caulobacter maris) protein is Pyridoxine/pyridoxamine 5'-phosphate oxidase.